The primary structure comprises 380 residues: Lipid-A-disaccharide synthase (380 aa).

It belongs to the LpxB family.

The catalysed reaction is a lipid X + a UDP-2-N,3-O-bis[(3R)-3-hydroxyacyl]-alpha-D-glucosamine = a lipid A disaccharide + UDP + H(+). It functions in the pathway bacterial outer membrane biogenesis; LPS lipid A biosynthesis. Its function is as follows. Condensation of UDP-2,3-diacylglucosamine and 2,3-diacylglucosamine-1-phosphate to form lipid A disaccharide, a precursor of lipid A, a phosphorylated glycolipid that anchors the lipopolysaccharide to the outer membrane of the cell. The chain is Lipid-A-disaccharide synthase from Rickettsia typhi (strain ATCC VR-144 / Wilmington).